We begin with the raw amino-acid sequence, 466 residues long: Ribosomal protein uS12 methylthiotransferase RimO (466 aa).

An MTTase N-terminal domain is found at 15–125 (PKVGFVSLGC…VMEAVHAALP (111 aa)). Cys-24, Cys-60, Cys-89, Cys-156, Cys-160, and Cys-163 together coordinate [4Fe-4S] cluster. In terms of domain architecture, Radical SAM core spans 142-380 (LTPRHYAYLK…AKQAEISALR (239 aa)). The 69-residue stretch at 382 to 450 (EAKIGSVQQC…EHDLFGDALP (69 aa)) folds into the TRAM domain.

The protein belongs to the methylthiotransferase family. RimO subfamily. Requires [4Fe-4S] cluster as cofactor.

The protein resides in the cytoplasm. The enzyme catalyses L-aspartate(89)-[ribosomal protein uS12]-hydrogen + (sulfur carrier)-SH + AH2 + 2 S-adenosyl-L-methionine = 3-methylsulfanyl-L-aspartate(89)-[ribosomal protein uS12]-hydrogen + (sulfur carrier)-H + 5'-deoxyadenosine + L-methionine + A + S-adenosyl-L-homocysteine + 2 H(+). Catalyzes the methylthiolation of an aspartic acid residue of ribosomal protein uS12. This chain is Ribosomal protein uS12 methylthiotransferase RimO, found in Xanthomonas oryzae pv. oryzae (strain MAFF 311018).